Consider the following 115-residue polypeptide: MSLDPAIAAKLKRNDAGLFSAVAQEKSTGDVLMVAWMDDEALARTLETRKGTYYSRSRQQYWVKGETSGHTQYVHEVRLDCDGDSVLLIVDQEGAACHTGTHTCFDTDVLLAAEQ.

A Mg(2+)-binding site is contributed by D80. C81 is a binding site for Zn(2+). Positions 82 and 84 each coordinate Mg(2+). Residues C97 and C104 each coordinate Zn(2+).

This sequence belongs to the PRA-CH family. In terms of assembly, homodimer. Mg(2+) is required as a cofactor. Zn(2+) serves as cofactor.

The protein resides in the cytoplasm. It carries out the reaction 1-(5-phospho-beta-D-ribosyl)-5'-AMP + H2O = 1-(5-phospho-beta-D-ribosyl)-5-[(5-phospho-beta-D-ribosylamino)methylideneamino]imidazole-4-carboxamide. It functions in the pathway amino-acid biosynthesis; L-histidine biosynthesis; L-histidine from 5-phospho-alpha-D-ribose 1-diphosphate: step 3/9. In terms of biological role, catalyzes the hydrolysis of the adenine ring of phosphoribosyl-AMP. This is Phosphoribosyl-AMP cyclohydrolase from Rhodococcus erythropolis (strain PR4 / NBRC 100887).